The sequence spans 340 residues: N-acetyl-gamma-glutamyl-phosphate reductase (340 aa).

Residue Cys-146 is part of the active site.

Belongs to the NAGSA dehydrogenase family. Type 1 subfamily.

The protein resides in the cytoplasm. It catalyses the reaction N-acetyl-L-glutamate 5-semialdehyde + phosphate + NADP(+) = N-acetyl-L-glutamyl 5-phosphate + NADPH + H(+). It functions in the pathway amino-acid biosynthesis; L-arginine biosynthesis; N(2)-acetyl-L-ornithine from L-glutamate: step 3/4. Functionally, catalyzes the NADPH-dependent reduction of N-acetyl-5-glutamyl phosphate to yield N-acetyl-L-glutamate 5-semialdehyde. The protein is N-acetyl-gamma-glutamyl-phosphate reductase of Rubrobacter xylanophilus (strain DSM 9941 / JCM 11954 / NBRC 16129 / PRD-1).